Consider the following 207-residue polypeptide: MFSRVFVRAASNAAKAGVKPPVKLFGVEGTYASALFTAASKETSVESASSSLVKLSSLIKEDAKLKHIMENPALSTKDRAVVVDSLVKSSANLDKPVVNLLKVLAENNKLGLFDKISSQFSILNDAHNGLIRGSVTTAQPLDSKNFKRLEKALQQSSLVGQQKTLKLDNVVKPDIKGGLIVEVGDQTIDLSVSSKIQKLNKVLEETI.

The protein belongs to the ATPase delta chain family. As to quaternary structure, F-type ATPases have 2 components, CF(1) - the catalytic core - and CF(0) - the membrane proton channel. CF(1) has five subunits: alpha(3), beta(3), gamma(1), delta(1), epsilon(1). CF(0) has three main subunits: a, b and c.

It localises to the mitochondrion. The protein resides in the mitochondrion inner membrane. Functionally, mitochondrial membrane ATP synthase (F(1)F(0) ATP synthase or Complex V) produces ATP from ADP in the presence of a proton gradient across the membrane which is generated by electron transport complexes of the respiratory chain. F-type ATPases consist of two structural domains, F(1) - containing the extramembraneous catalytic core and F(0) - containing the membrane proton channel, linked together by a central stalk and a peripheral stalk. During catalysis, ATP synthesis in the catalytic domain of F(1) is coupled via a rotary mechanism of the central stalk subunits to proton translocation. Part of the complex F(0) domain and the peripheric stalk, which acts as a stator to hold the catalytic alpha(3)beta(3) subcomplex and subunit a/ATP6 static relative to the rotary elements. This chain is ATP synthase subunit 5, mitochondrial (ATP5), found in Candida glabrata (strain ATCC 2001 / BCRC 20586 / JCM 3761 / NBRC 0622 / NRRL Y-65 / CBS 138) (Yeast).